The sequence spans 706 residues: Histone deacetylase HDA1 (706 aa).

Positions 1-24 (MDSVMVKKEVLENPDHDLKRKLEE) are enriched in basic and acidic residues. The segment at 1–36 (MDSVMVKKEVLENPDHDLKRKLEENKEEENSLSTTS) is disordered. The interval 67-396 (RYHAKIFTSY…ALSVAKVLIG (330 aa)) is histone deacetylase. Histidine 206 is an active-site residue.

The protein belongs to the histone deacetylase family. HD type 2 subfamily.

The protein localises to the nucleus. It catalyses the reaction N(6)-acetyl-L-lysyl-[histone] + H2O = L-lysyl-[histone] + acetate. In terms of biological role, responsible for the deacetylation of lysine residues on the N-terminal part of the core histones (H2A, H2B, H3 and H4). Histone deacetylation gives a tag for epigenetic repression and plays an important role in transcriptional regulation, cell cycle progression and developmental events. Histone deacetylases act via the formation of large multiprotein complexes. This chain is Histone deacetylase HDA1 (HDA1), found in Saccharomyces cerevisiae (strain ATCC 204508 / S288c) (Baker's yeast).